Consider the following 449-residue polypeptide: UDP-N-acetylmuramoylalanine--D-glutamate ligase (449 aa).

118-124 (GTNGKTT) lines the ATP pocket.

The protein belongs to the MurCDEF family.

It is found in the cytoplasm. It carries out the reaction UDP-N-acetyl-alpha-D-muramoyl-L-alanine + D-glutamate + ATP = UDP-N-acetyl-alpha-D-muramoyl-L-alanyl-D-glutamate + ADP + phosphate + H(+). It participates in cell wall biogenesis; peptidoglycan biosynthesis. Functionally, cell wall formation. Catalyzes the addition of glutamate to the nucleotide precursor UDP-N-acetylmuramoyl-L-alanine (UMA). In Staphylococcus epidermidis (strain ATCC 35984 / DSM 28319 / BCRC 17069 / CCUG 31568 / BM 3577 / RP62A), this protein is UDP-N-acetylmuramoylalanine--D-glutamate ligase.